A 100-amino-acid chain; its full sequence is UPF0213 protein FN1575 (100 aa).

The GIY-YIG domain occupies 1-77 (MAYYLYMLRC…KYIKKKKENI (77 aa)).

The protein belongs to the UPF0213 family.

This chain is UPF0213 protein FN1575, found in Fusobacterium nucleatum subsp. nucleatum (strain ATCC 25586 / DSM 15643 / BCRC 10681 / CIP 101130 / JCM 8532 / KCTC 2640 / LMG 13131 / VPI 4355).